The sequence spans 344 residues: L-rhamnose-proton symporter (344 aa).

A run of 10 helical transmembrane segments spans residues 4–24 (AITM…CFYA), 38–58 (WSVG…ALLL), 68–88 (FSLS…IGNI), 101–121 (MGIG…TPII), 137–157 (TLLG…AGQL), 175–195 (LVLA…MNAA), 214–234 (LPSY…FCFI), 259–279 (VLLS…YAWG), 290–310 (ISWM…GLVL), and 323–343 (VLSL…MGMA).

Belongs to the L-rhamnose transporter (TC 2.A.7.6) family.

It localises to the cell inner membrane. The enzyme catalyses L-rhamnopyranose(in) + H(+)(in) = L-rhamnopyranose(out) + H(+)(out). In terms of biological role, uptake of L-rhamnose across the cytoplasmic membrane with the concomitant transport of protons into the cell (symport system). This Escherichia coli O17:K52:H18 (strain UMN026 / ExPEC) protein is L-rhamnose-proton symporter.